Consider the following 620-residue polypeptide: Protein regulator of cytokinesis 1 (620 aa).

The tract at residues 1–303 (MRRSEVLAEE…IEAIRVELVQ (303 aa)) is required for the interaction with KIF4A. Positions 1–341 (MRRSEVLAEE…QLHDAEIVRL (341 aa)) are dimerization. Coiled-coil stretches lie at residues 96–133 (ILQLEKDLRTQVELMRKQKKERKQELKLLQEQDQELCE), 211–304 (SLEN…LVQY), and 383–463 (GNLL…TEML). A spectrin-fold region spans residues 342-466 (KNYYEVHKEL…QTETEMLYGS (125 aa)). Residues 446–459 (AKQERQLKNKKQTE) are compositionally biased toward basic and acidic residues. Residues 446-488 (AKQERQLKNKKQTETEMLYGSAPRTPSKRRGLAPNTPGKARKL) are disordered. Residues 467 to 620 (APRTPSKRRG…GILNSTNIQS (154 aa)) form a unstructured, Arg/Lys rich region. Thr470 and Thr481 each carry phosphothreonine; by CDK1. Phosphoserine is present on residues Ser513, Arg541, and Ser571. Residues 517-545 (RLPPSGSKPVAASTCSGKKTPRTGRHGAN) are disordered. Thr578 bears the Phosphothreonine mark. The interval 600–620 (LSKASKSDATSGILNSTNIQS) is disordered. Over residues 606-620 (SDATSGILNSTNIQS) the composition is skewed to polar residues. Thr616 carries the post-translational modification Phosphothreonine; by PLK1.

The protein belongs to the MAP65/ASE1 family. As to quaternary structure, homodimer. Interacts with the C-terminal Rho-GAP domain and the basic region of RACGAP1. The interaction with RACGAP1 inhibits its GAP activity towards CDC42 in vitro, which may be required for maintaining normal spindle morphology. Interacts (via N-terminus) with the C-terminus of CENPE (via C-terminus); the interaction occurs during late mitosis. Interacts (via N-terminus) with KIF4A (via C-terminus); the interaction is required for the progression of mitosis. Interacts (via N-terminus) with KIF23 (via C-terminus); the interaction occurs during late mitosis. Interacts with KIF14 and KIF20A. Interacts with PLK1. Interacts with KIF20B. Interacts with CCDC66. In terms of processing, phosphorylation by CDK1 in early mitosis holds PRC1 in an inactive monomeric state, during the metaphase to anaphase transition, PRC1 is dephosphorylated, promoting interaction with KIF4A, which then translocates PRC1 along mitotic spindles to the plus ends of antiparallel interdigitating microtubules. Dephosphorylation also promotes MT-bundling activity by allowing dimerization. Phosphorylation by CDK1 prevents PLK1-binding: upon degradation of CDK1 at anaphase and dephosphorylation, it is then phosphorylated by PLK1, leading to cytokinesis. Overexpressed in bladder cancer cells.

The protein resides in the nucleus. Its subcellular location is the cytoplasm. It is found in the cytoskeleton. It localises to the spindle pole. The protein localises to the midbody. The protein resides in the chromosome. In terms of biological role, key regulator of cytokinesis that cross-links antiparrallel microtubules at an average distance of 35 nM. Essential for controlling the spatiotemporal formation of the midzone and successful cytokinesis. Required for KIF14 localization to the central spindle and midbody. Required to recruit PLK1 to the spindle. Stimulates PLK1 phosphorylation of RACGAP1 to allow recruitment of ECT2 to the central spindle. Acts as an oncogene for promoting bladder cancer cells proliferation, apoptosis inhibition and carcinogenic progression. The protein is Protein regulator of cytokinesis 1 of Homo sapiens (Human).